The sequence spans 487 residues: MKPIADLRSYLEFLESKDMLRRVSVEASPILEIPEILRRIMYRGSGYAVLFEKVKGHEGFRIAGNIFCSLDVVRQALGVERLEVIGERLFEPLKGPPPLGIGGKLRSLGEVLSLGKYMPKAVGRAGFTANVLEGREASFNLIPAFKVWPKDGGRYLTYALVHVRDPVRGVMNMGVYRVMIAGDKEGVVHWQIHKRGMQAQQDSVEKGERRIPAALVIGSDPGTLLTGAMPVPYPIDKHLFAGVVRGEGLPVYRLPNGIHVPANAEIVLEGYIDLEDLREEGPYGDHFGYYDKPSRLFPTFRLERVWHREEPIYYGSVTGKPPLEDVVIGKFAERIFLPAIQTLLPEVVDIDLPPHGVFQGMAFVSIRKRYPGHGKKALLALMGLGQLSLTKIIVVVDHDINVHDVNQVIWAVSSHVDPQRDVLVVPHSHTDELDPATPTPMYGSKLGIDATRKLPEEYGGKQWPEEVAPDPETVRLVEGRWGEYGLD.

This sequence belongs to the UbiD family.

This is an uncharacterized protein from Aeropyrum pernix (strain ATCC 700893 / DSM 11879 / JCM 9820 / NBRC 100138 / K1).